The chain runs to 336 residues: MEQLIAAILTMVAGVLVCAAYFWSTNLVLDWIFPSKGKFGAVASRNLRIANSIRPWLFLAPALLALTLYLVYPVVQSVWLSLHGRGGQNFVGLSNYSWMINDGEFRQSIFNNFLWLLVVPALSTFFGLIIAALTDRIWWGNIAKTLIFMPMAISFVGAAVIWKFIYDYRAAGSEQIGLLNAIVVALGGEPQAWITLPFWNNFFLMVILIWIQTGFAMVILSAALRGIPEETIEAAVIDGANGWQIFFKIMVPQIWGTIAVVWTTITILVLKVFDIVLAMTNGQWQSQVLANLMFDWMFRGGGDFGRGAAIAVVIMILVVPIMIWNIRNATRESGGH.

8 helical membrane-spanning segments follow: residues 4 to 24 (LIAAILTMVAGVLVCAAYFWS), 55 to 75 (PWLFLAPALLALTLYLVYPVV), 113 to 133 (FLWLLVVPALSTFFGLIIAAL), 146 to 166 (LIFMPMAISFVGAAVIWKFIY), 176 to 196 (IGLLNAIVVALGGEPQAWITL), 202 to 222 (FFLMVILIWIQTGFAMVILSA), 258 to 278 (IAVVWTTITILVLKVFDIVLA), and 304 to 324 (FGRGAAIAVVIMILVVPIMIW). The ABC transmembrane type-1 domain occupies 109–325 (IFNNFLWLLV…ILVVPIMIWN (217 aa)).

This sequence belongs to the binding-protein-dependent transport system permease family. MalFG subfamily.

Its subcellular location is the cell inner membrane. Functionally, part of the binding-protein-dependent transport system for alpha-glucosides such as sucrose, maltose and trehalose. Probably responsible for the translocation of the substrate across the membrane. The protein is Alpha-glucoside transport system permease protein AglF (aglF) of Rhizobium meliloti (strain 1021) (Ensifer meliloti).